We begin with the raw amino-acid sequence, 2533 residues long: Highly reducing polyketide synthase azaB (2533 aa).

Residues 7–433 enclose the Ketosynthase family 3 (KS3) domain; the sequence is TAPMAIIGMA…GSNAHAILES (427 aa). Active-site for beta-ketoacyl synthase activity residues include Cys180, His315, and His355. The malonyl-CoA:ACP transacylase (MAT) domain stretch occupies residues 554–821; sequence WVFTGQGAQW…VEFESSFRHM (268 aa). Residues 946-1081 form an N-terminal hotdog fold region; the sequence is SDLVGYSQPS…GRISVITTSD (136 aa). The PKS/mFAS DH domain occupies 946 to 1254; that stretch reads SDLVGYSQPS…CQSLGRALDR (309 aa). The dehydratase (DH) domain stretch occupies residues 947 to 1251; the sequence is DLVGYSQPSI…GLTCQSLGRA (305 aa). His978 functions as the Proton acceptor; for dehydratase activity in the catalytic mechanism. The tract at residues 1097–1254 is C-terminal hotdog fold; the sequence is YNRRIDPRYM…CQSLGRALDR (158 aa). Asp1163 acts as the Proton donor; for dehydratase activity in catalysis. The tract at residues 1419–1554 is methyltransferase (CMet) domain; sequence TRQVSELVRL…GGKLILMETT (136 aa). The enoyl reductase (ER) domain stretch occupies residues 1839 to 2155; the sequence is GLIDTLVFHD…TGQHMGKIII (317 aa). Residues 2178–2349 form a ketoreductase (KR) domain region; it reads ASYVIVGGLG…AVSLDLGIVR (172 aa). Residues 2455–2532 enclose the Carrier domain; that stretch reads DAAALICQEL…DLSLRVATKR (78 aa). Ser2492 carries the O-(pantetheine 4'-phosphoryl)serine modification.

It functions in the pathway secondary metabolite biosynthesis. Functionally, highly reducing polyketide synthase; part of the gene cluster that mediates the biosynthesis of azaphilones, a class of fungal metabolites characterized by a highly oxygenated pyrano-quinone bicyclic core and exhibiting a broad range of bioactivities. In the first step, the non-reducing polyketide synthase azaA forms the hexaketide precursor from successive condensations of five malonyl-CoA units, presumably with a simple acetyl-CoA starter unit. The reactive polyketide chain then undergoes a PT-mediated C2-C7 cyclization to afford the aromatic ring and is eventually released as an aldehyde through the R-domain. The putative ketoreductase azaE is proposed to catalyze the reduction of the terminal ketone resulting in the early culture product FK17-P2a. The monooxygenase azaH was demonstrated to be the only enzyme required to convert FK17-P2a to azanigerone E. AzaH first hydroxylates the benzaldehyde intermediate FK17-P2a at C4, which triggers the formation of the pyran-ring to afford azanigerone E. In parallel, the 2,4-dimethylhexanoyl chain is synthesized by the HR-PKS azaB and is proposed to be transferred to the C4-hydroxyl of azanigerone E by the acyltransferase azaD directly from the ACP domain of azaB. Alternatively, the 2,4-dimethyl-hexanoyl chain may be offloaded from the HR-PKS as a carboxylic acid and converted to an acyl-CoA by azaF. The resulting acyl-CoA molecule could then be taken up as a substrate by AzaD to form azanigerone B. To yield the carboxylic acid substituent in azanigerone A, the hydroxypropyl side chain of azanigerone B would need to undergo a C-C oxidative cleavage catalyzed by cytochrome P450 AzaI. AzaI is proposed to act on a vicinal diol that leads to a C-C bond scission either through an alkoxyradical intermediate or a peroxy complex. In the biosynthesis of azanigerone A, azanigerone B first undergoes hydroxylation at C10, possibly catalyzed by one of the two FAD-dependent monooxygenases encoded in the cluster, azaG or azaL, resulting in the vicinal diol azanigerone C. Oxidative cleavage of azanigerone C by azaI would yield the corresponding aldehyde derivative of azanigerone A. Finally, the dehydrogenase azaJ is proposed to convert the aldehyde functional group into the carboxylic acid, completing the conversion from azanigerone B to azanigerone A. Alternatively, the oxidation of aldehyde to carboxylic acid may be catalyzed by the same P450 enzyme azaI via consecutive oxidation or by endogenous alcohol dehydrogenase. The chain is Highly reducing polyketide synthase azaB from Aspergillus niger (strain ATCC 1015 / CBS 113.46 / FGSC A1144 / LSHB Ac4 / NCTC 3858a / NRRL 328 / USDA 3528.7).